Here is a 158-residue protein sequence, read N- to C-terminus: 3-dehydroquinate dehydratase (158 aa).

Residue Y22 is the Proton acceptor of the active site. Positions 74, 80, and 87 each coordinate substrate. H100 functions as the Proton donor in the catalytic mechanism. Residues 101-102 (IS) and R111 each bind substrate.

Belongs to the type-II 3-dehydroquinase family. As to quaternary structure, homododecamer.

It catalyses the reaction 3-dehydroquinate = 3-dehydroshikimate + H2O. The protein operates within metabolic intermediate biosynthesis; chorismate biosynthesis; chorismate from D-erythrose 4-phosphate and phosphoenolpyruvate: step 3/7. Catalyzes a trans-dehydration via an enolate intermediate. The polypeptide is 3-dehydroquinate dehydratase (Helicobacter hepaticus (strain ATCC 51449 / 3B1)).